A 104-amino-acid polypeptide reads, in one-letter code: Large ribosomal subunit protein uL24 (104 aa).

The protein belongs to the universal ribosomal protein uL24 family. Part of the 50S ribosomal subunit.

In terms of biological role, one of two assembly initiator proteins, it binds directly to the 5'-end of the 23S rRNA, where it nucleates assembly of the 50S subunit. Its function is as follows. One of the proteins that surrounds the polypeptide exit tunnel on the outside of the subunit. The polypeptide is Large ribosomal subunit protein uL24 (Serratia proteamaculans (strain 568)).